A 274-amino-acid polypeptide reads, in one-letter code: 2,3,4,5-tetrahydropyridine-2,6-dicarboxylate N-succinyltransferase (274 aa).

Substrate-binding residues include Arg104 and Asp141.

The protein belongs to the transferase hexapeptide repeat family. Homotrimer.

It localises to the cytoplasm. It catalyses the reaction (S)-2,3,4,5-tetrahydrodipicolinate + succinyl-CoA + H2O = (S)-2-succinylamino-6-oxoheptanedioate + CoA. Its pathway is amino-acid biosynthesis; L-lysine biosynthesis via DAP pathway; LL-2,6-diaminopimelate from (S)-tetrahydrodipicolinate (succinylase route): step 1/3. The sequence is that of 2,3,4,5-tetrahydropyridine-2,6-dicarboxylate N-succinyltransferase from Shewanella sediminis (strain HAW-EB3).